The sequence spans 534 residues: Protein BFR2 (534 aa).

Positions 27–148 (ENASLFQHNE…ETEEAQQKRH (122 aa)) are disordered. Phosphoserine is present on residues S41 and S44. The segment covering 52-77 (EETKKAHYLEVEKSKLRAEKGLELND) has biased composition (basic and acidic residues). Residues 86-161 (SRQALYEEVS…KLIQQETKQA (76 aa)) adopt a coiled-coil conformation. 2 stretches are compositionally biased toward acidic residues: residues 93–114 (EVSENEDEEEEEEEEEEKEEDA) and 121–142 (SEDEEVEIDEEESDADGGETEE). Phosphoserine is present on residues S366, S372, and S379.

Belongs to the AATF family.

It localises to the nucleus. Its subcellular location is the nucleolus. Involved in endoplasmic reticulum to Golgi transport. Involved in a protein-transport step blocked by brefeldin A, which disrupts the Golgi apparatus and its incoming protein flux. May also be involved for mass growth or cell proliferation. The polypeptide is Protein BFR2 (BFR2) (Saccharomyces cerevisiae (strain ATCC 204508 / S288c) (Baker's yeast)).